The sequence spans 3582 residues: Ubiquitin carboxyl-terminal hydrolase 34 (3582 aa).

Serine 352, serine 486, serine 487, and serine 490 each carry phosphoserine. Disordered stretches follow at residues 503–533 (EEEE…HQSG), 551–670 (QQRL…ELRN), 682–705 (GESQ…VFNT), 775–801 (HHHH…DGHM), and 1496–1515 (TGSY…DQVE). Positions 510 to 524 (AAPSPWSPAASPQSS) are enriched in low complexity. The segment covering 560–570 (SMQGSSDETAN) has biased composition (polar residues). Residues 571-590 (SGEDGSSGPGSSSGHSDGSS) are compositionally biased toward low complexity. Over residues 591–609 (NEVNSSHASQSAGSPGSEV) the composition is skewed to polar residues. Residues 610-653 (QSEDIADIEALKEEEEEEEEEEEEEEEEDDEEEEDEEEDDDDDD) are compositionally biased toward acidic residues. Polar residues predominate over residues 684 to 697 (SQGTSERNGTNSGT). A compositionally biased stretch (basic residues) spans 775 to 798 (HHHHHHHHHHHHHHHHHHHHHHHD). The segment covering 1504–1514 (PDSDDSSEDQV) has biased composition (acidic residues). A Phosphoserine modification is found at serine 1506. Residues 1931–2276 (VGLTNLGATC…SAYMLFYKRM (346 aa)) form the USP domain. Catalysis depends on cysteine 1940, which acts as the Nucleophile. Residue histidine 2201 is the Proton acceptor of the active site. Position 2525 is a phosphoserine (serine 2525). The segment at 3369 to 3484 (SLQEQEAKER…QSNNGRFDDC (116 aa)) is disordered. Residues 3373 to 3384 (QEAKERKTKDDE) show a composition bias toward basic and acidic residues. 2 positions are modified to phosphoserine: serine 3395 and serine 3396. Position 3418 is a phosphothreonine (threonine 3418). Phosphoserine is present on residues serine 3423 and serine 3443. The span at 3463-3484 (DGSHIRSQHAEEQSNNGRFDDC) shows a compositional bias: basic and acidic residues. Serine 3539 is subject to Phosphoserine.

The protein belongs to the peptidase C19 family. Interacts with AXIN1 and AXIN2.

It carries out the reaction Thiol-dependent hydrolysis of ester, thioester, amide, peptide and isopeptide bonds formed by the C-terminal Gly of ubiquitin (a 76-residue protein attached to proteins as an intracellular targeting signal).. In terms of biological role, ubiquitin hydrolase that can remove conjugated ubiquitin from AXIN1 and AXIN2, thereby acting as a regulator of Wnt signaling pathway. Acts as an activator of the Wnt signaling pathway downstream of the beta-catenin destruction complex by deubiquitinating and stabilizing AXIN1 and AXIN2, leading to promote nuclear accumulation of AXIN1 and AXIN2 and positively regulate beta-catenin (CTNBB1)-mediated transcription. Recognizes and hydrolyzes the peptide bond at the C-terminal Gly of ubiquitin. Involved in the processing of poly-ubiquitin precursors as well as that of ubiquitinated proteins. The chain is Ubiquitin carboxyl-terminal hydrolase 34 (Usp34) from Mus musculus (Mouse).